Reading from the N-terminus, the 94-residue chain is MKVQDKQHIRAWVSGKVQGVWYRNSTRQVAERLHVLGYAKNLPDGRVEVLAYGDTEAVNQLIDWLHDGPEAAIVTEVKTKQVEGETPPLGFEVC.

The region spanning His8 to Cys94 is the Acylphosphatase-like domain. Catalysis depends on residues Arg23 and Asn41.

This sequence belongs to the acylphosphatase family.

It carries out the reaction an acyl phosphate + H2O = a carboxylate + phosphate + H(+). The sequence is that of Acylphosphatase (acyP) from Hahella chejuensis (strain KCTC 2396).